The sequence spans 408 residues: Protein BTN1 (408 aa).

Residues 1–30 (MSDKSHQIYCYFWLFGLINNVLYVVILSAA) form the signal peptide. Helical transmembrane passes span 42 to 62 (LVLLADIFPSLAIKLCSPFFI), 80 to 100 (LGMFLVSFKNLFVCLLGISFA), 128 to 148 (SGTGGAGIIGGASYMFLTSIF), 150 to 170 (VPVKLTLLVFSLLPFAFLFYF), 238 to 258 (TVYLFEYLINQAVAPTLLFPI), 323 to 343 (WFYVTHSPWAVMILIFYEGFL), and 369 to 389 (GAVSIADSFGVFLAALLGLGL).

This sequence belongs to the battenin family.

It is found in the vacuole membrane. Plays a role in vacuolar arginine transport. Involved in pH homeostasis. May be involved in ion homeostasis together with IST2. Not necessary for mitochondrial function or ATP synthase degradation. The chain is Protein BTN1 (YHC3) from Saccharomyces cerevisiae (strain ATCC 204508 / S288c) (Baker's yeast).